Consider the following 456-residue polypeptide: Enolase (456 aa).

A (2R)-2-phosphoglycerate-binding site is contributed by Q164. E207 acts as the Proton donor in catalysis. Mg(2+) contacts are provided by D244, E287, and D314. (2R)-2-phosphoglycerate is bound by residues K339, R368, S369, and K390. K339 serves as the catalytic Proton acceptor.

The protein belongs to the enolase family. Component of the RNA degradosome, a multiprotein complex involved in RNA processing and mRNA degradation. Mg(2+) is required as a cofactor.

The protein resides in the cytoplasm. The protein localises to the secreted. Its subcellular location is the cell surface. It carries out the reaction (2R)-2-phosphoglycerate = phosphoenolpyruvate + H2O. It participates in carbohydrate degradation; glycolysis; pyruvate from D-glyceraldehyde 3-phosphate: step 4/5. Catalyzes the reversible conversion of 2-phosphoglycerate (2-PG) into phosphoenolpyruvate (PEP). It is essential for the degradation of carbohydrates via glycolysis. The protein is Enolase of Francisella tularensis subsp. holarctica (strain LVS).